A 203-amino-acid chain; its full sequence is NAD(P)H dehydrogenase (quinone) (203 aa).

The Flavodoxin-like domain occupies 3–194 (VLIVYYSLYG…DAARFQGRHI (192 aa)). Residues 9-14 (SLYGHV) and 82-84 (TRF) contribute to the FMN site. NAD(+) is bound at residue Tyr11. Substrate is bound at residue Trp102. Residues 117 to 123 (STATQHG) and His138 contribute to the FMN site.

It belongs to the WrbA family. Requires FMN as cofactor.

It catalyses the reaction a quinone + NADH + H(+) = a quinol + NAD(+). The catalysed reaction is a quinone + NADPH + H(+) = a quinol + NADP(+). The chain is NAD(P)H dehydrogenase (quinone) from Solidesulfovibrio magneticus (strain ATCC 700980 / DSM 13731 / RS-1) (Desulfovibrio magneticus).